We begin with the raw amino-acid sequence, 729 residues long: Kinesin-like protein KAR3 (729 aa).

The segment at 1-48 (MESLPRTPTKGRSTQHLSTPSPKNDILAMNGHKRRNTTTPPPKHTLLK) is disordered. Positions 1–109 (MESLPRTPTK…ENVNELNRTQ (109 aa)) are globular. Polar residues predominate over residues 10–22 (KGRSTQHLSTPSP). A coiled-coil region spans residues 110 to 357 (AILFEKKATL…LEEYIKDTEL (248 aa)). Residues asparagine 386, arginine 388, arginine 392, glutamate 454, glycine 477, serine 478, glycine 479, lysine 480, threonine 481, phenylalanine 482, glutamate 554, lysine 579, and threonine 694 each contribute to the ATP site. The region spanning 386–723 (NIRVYCRIRP…LRFASKVNST (338 aa)) is the Kinesin motor domain.

This sequence belongs to the TRAFAC class myosin-kinesin ATPase superfamily. Kinesin family. NCD subfamily. Interacts with CIK1; the interaction is direct. Interacts with VIK1; the interaction is direct.

The protein resides in the cytoplasm. The protein localises to the cytoskeleton. It localises to the microtubule organizing center. Its subcellular location is the spindle pole body. It is found in the nucleus. The protein resides in the chromosome. The protein localises to the spindle. It carries out the reaction ATP + H2O = ADP + phosphate + H(+). The enzyme catalyses ATP + H2O + a kinesin associated with a microtubule at position (n) = ADP + phosphate + a kinesin associated with a microtubule at position (n-1, toward the minus end).. Its function is as follows. Minus end-directed microtubule (MT) motor involved in spindle midzone assembly, poleward transport of newly captured kinetochores along the lateral side of MTs, karyogamy (nuclear fusion) during mating, and with an essential function in meiosis I. Functions together with the accessory proteins CIK1 or VIK1. Drives the poleward transport of newly captured kinetochores along the lateral side of MTs, both during S-phase and during M-phase. To contribute to spindle midzone assembly during mitotic metaphase, the nuclear KAR3-CIK1 motor cross-links anti-parallel microtubules to align them on the spindle axis; as the motor travels polewards splayed microtubules are pulled into alignment. During the karyogamy (nuclear fusion) step of mating, KAR3-CIK1 cross-links antiparallel cytoplasmic microtubules emanating from the spindle pole bodies of mating partners; the motor activity of KAR3 creates the force that pulls the nuclei together by sliding cross-linked microtubules past one another. KAR3-CIK1 promotes microtubule shortening predominantly from the microtubule plus-end. Together with cytoplasmic VIK1, may act to stabilize microtubules. Requires accessory protein VIK1 for spindle pole body localization and to allow the CIN8 and KIP1 motors to generate outwardly directed spindle forces. Essential during meiosis I. The ATPase activity is stimulated by microtubule-binding. This chain is Kinesin-like protein KAR3 (KAR3), found in Saccharomyces cerevisiae (strain ATCC 204508 / S288c) (Baker's yeast).